A 215-amino-acid chain; its full sequence is Octanoyltransferase (215 aa).

A BPL/LPL catalytic domain is found at 42 to 215 (QNTPDEIWLL…AEKLKARLKQ (174 aa)). Residues 81-88 (RGGQITYH), 148-150 (ALG), and 161-163 (GLA) contribute to the substrate site. The active-site Acyl-thioester intermediate is the cysteine 179.

Belongs to the LipB family.

Its subcellular location is the cytoplasm. The enzyme catalyses octanoyl-[ACP] + L-lysyl-[protein] = N(6)-octanoyl-L-lysyl-[protein] + holo-[ACP] + H(+). It functions in the pathway protein modification; protein lipoylation via endogenous pathway; protein N(6)-(lipoyl)lysine from octanoyl-[acyl-carrier-protein]: step 1/2. Catalyzes the transfer of endogenously produced octanoic acid from octanoyl-acyl-carrier-protein onto the lipoyl domains of lipoate-dependent enzymes. Lipoyl-ACP can also act as a substrate although octanoyl-ACP is likely to be the physiological substrate. This chain is Octanoyltransferase, found in Nitrosospira multiformis (strain ATCC 25196 / NCIMB 11849 / C 71).